A 531-amino-acid chain; its full sequence is MNESVARVFDRILRGLGLKTLNAQFLLSYALMFGLAACASVALYLSMSISPETINVAGAQRMLSQKMAREALQLRLGAGDPKALAATIAQYERSAADLDAGNAERNVSRMGAPEIAAQRQKVAQIWGRYRAMLDQVAQPASQVDLRGFSQYSTELLGELNNLVSLMSARADSVQHTQMWIAFGCLLAILVLVVLGRQFGLAPLMRQLRGLEVALTEVGAANFTHALAAGHADNEIGRIVAGYERMRQDVSGLLANVKRSAAETDKDVAEALEQALGAGDQVARQHQDLDQVATAMNEMSATVAEVARHANHAAHSTRDAAALAHEGRRLVEHASSQTGALAEELEQTALALNTLHQHAGSVGQVLTVISSIAEQTNLLALNAAIEAARAGEAGRGFAVVADEVRSLANRTQQSTQEIQGLIEQLQDGANDAVAAMRGSASHAQSNLVEADSAAQALGRIVATVEELDGLNQQIATAAEEQSQVAQDIDRNITNVSGLSEQAHEGTAAVLSANQRVKEHMAGLRVVLGRFRT.

Residues 1–24 (MNESVARVFDRILRGLGLKTLNAQ) are Cytoplasmic-facing. Residues 25–45 (FLLSYALMFGLAACASVALYL) traverse the membrane as a helical segment. The Periplasmic portion of the chain corresponds to 46–174 (SMSISPETIN…LMSARADSVQ (129 aa)). The segment at 52 to 140 (ETINVAGAQR…AMLDQVAQPA (89 aa)) is pilJ-type. Residues 54–65 (INVAGAQRMLSQ) carry the N-box motif. Arg-61 is a binding site for nitrate. Residues 175 to 195 (HTQMWIAFGCLLAILVLVVLG) traverse the membrane as a helical segment. At 196-531 (RQFGLAPLMR…LRVVLGRFRT (336 aa)) the chain is on the cytoplasmic side. Residues 201–254 (APLMRQLRGLEVALTEVGAANFTHALAAGHADNEIGRIVAGYERMRQDVSGLLA) form the HAMP domain. Positions 259–495 (SAAETDKDVA…DIDRNITNVS (237 aa)) constitute a Methyl-accepting transducer domain.

This sequence belongs to the methyl-accepting chemotaxis (MCP) protein family. In terms of assembly, ligand free ligand-binding domain (LBD) is present in a monomer-dimer equilibrium. Nitrate binding to the periplasmic LBD stabilizes the homodimer.

It is found in the cell inner membrane. Chemotactic-signal transducers respond to changes in the concentration of attractants and repellents in the environment, transduce a signal from the outside to the inside of the cell, and facilitate sensory adaptation through the variation of the level of methylation. McpN is a chemoreceptor that recognizes specifically nitrate and mediates chemoattraction. Binds nitrate specifically and shows no affinity for other ligands such as nitrite. McpN-mediated taxis occurs only under nitrate starvation conditions. This is Methyl-accepting chemotaxis protein McpN from Pseudomonas aeruginosa (strain ATCC 15692 / DSM 22644 / CIP 104116 / JCM 14847 / LMG 12228 / 1C / PRS 101 / PAO1).